A 275-amino-acid chain; its full sequence is uncharacterized protein (275 aa).

The next 3 membrane-spanning stretches (helical) occupy residues 15-35, 39-59, and 70-90; these read LFLP…FLGS, AIMI…FGLF, and ILYL…VVYL. Residues 140–191 form a disordered region; it reads SSKTDMDSQVAEAPQTEEGEPSVNQVPQEAGASHRVGPYQDQGLATDRNGNP.

The protein resides in the mitochondrion membrane. This is an uncharacterized protein from Arabidopsis thaliana (Mouse-ear cress).